Here is a 318-residue protein sequence, read N- to C-terminus: L-lactate dehydrogenase (318 aa).

Residues Val18, Asp39, Lys44, Tyr69, and 83–84 each bind NAD(+); that span reads GA. Residues Gln86 and Arg92 each coordinate substrate. Residues Ser105, 122-124, and Ser147 each bind NAD(+); that span reads VSN. Residue 124-127 participates in substrate binding; the sequence is NPVD. A substrate-binding site is contributed by 152 to 155; that stretch reads DTSR. The active-site Proton acceptor is the His179. Phosphotyrosine is present on Tyr225. Thr234 is a substrate binding site.

The protein belongs to the LDH/MDH superfamily. LDH family. In terms of assembly, homotetramer.

It is found in the cytoplasm. The enzyme catalyses (S)-lactate + NAD(+) = pyruvate + NADH + H(+). Its pathway is fermentation; pyruvate fermentation to lactate; (S)-lactate from pyruvate: step 1/1. In terms of biological role, catalyzes the conversion of lactate to pyruvate. This is L-lactate dehydrogenase from Clostridium botulinum (strain ATCC 19397 / Type A).